The following is a 232-amino-acid chain: Beta-casein (232 aa).

Residues 1 to 15 (MKLLILACFVALALA) form the signal peptide. Residue Asn22 is glycosylated (N-linked (GlcNAc...) asparagine). Residue Ser24 is modified to Phosphoserine. At Thr27 the chain carries Phosphothreonine. A phosphoserine mark is found at Ser30, Ser32, Ser33, and Ser34. The segment covering 48 to 63 (KLKREEQQQTENERQN) has biased composition (basic and acidic residues). Residues 48–74 (KLKREEQQQTENERQNKIHQFPQPQPL) are disordered.

Belongs to the beta-casein family. Mammary gland specific. Secreted in milk.

It is found in the secreted. Important role in determination of the surface properties of the casein micelles. The polypeptide is Beta-casein (CSN2) (Sus scrofa (Pig)).